A 461-amino-acid chain; its full sequence is Argininosuccinate lyase (461 aa).

Belongs to the lyase 1 family. Argininosuccinate lyase subfamily.

It is found in the cytoplasm. The catalysed reaction is 2-(N(omega)-L-arginino)succinate = fumarate + L-arginine. The protein operates within amino-acid biosynthesis; L-arginine biosynthesis; L-arginine from L-ornithine and carbamoyl phosphate: step 3/3. In Symbiobacterium thermophilum (strain DSM 24528 / JCM 14929 / IAM 14863 / T), this protein is Argininosuccinate lyase.